A 399-amino-acid polypeptide reads, in one-letter code: MQERHLFTSESVSEGHPDKIADQISDAILDAMLEQDPQARVACETTVTTGLVLVVGEISTTAYVDIQKVVRETIKKIGYRDGQYGFDGDNCAVIVALDEQSPDIAQGVDDSLESREKDEDPLDKIGAGDQGLMFGFAVDQTPELMPLPIALSHRLMRKVAELRKSGQLAYLRPDAKAQVTVEYDENEQPKRVDTVVISTQHDEDVTLETIQKDMLEQVIKTVIPAEYLDDKTKYFINPTGRFVIGGPQGDSGLTGRKIIVDTYGGYARHGGGAFSGKDATKVDRSASYAARYIAKNIVAAGLARKCEVQLAYAIGVAQPVSVSVNTFETGTVSEEAIQTAIRENFDLRPAGIIKMLDLQRPIYKQTAAYGHFGRTDVDLSWERLDKVDALKASIAKLNH.

Residue H16 coordinates ATP. D18 serves as a coordination point for Mg(2+). Residue E44 coordinates K(+). The L-methionine site is built by E57 and Q100. The tract at residues 100 to 110 (QSPDIAQGVDD) is flexible loop. Residues 174-176 (DAK), 241-242 (RF), D250, 256-257 (RK), A273, and K277 contribute to the ATP site. D250 lines the L-methionine pocket. K281 serves as a coordination point for L-methionine.

Belongs to the AdoMet synthase family. In terms of assembly, homotetramer; dimer of dimers. The cofactor is Mg(2+). It depends on K(+) as a cofactor.

Its subcellular location is the cytoplasm. The catalysed reaction is L-methionine + ATP + H2O = S-adenosyl-L-methionine + phosphate + diphosphate. It functions in the pathway amino-acid biosynthesis; S-adenosyl-L-methionine biosynthesis; S-adenosyl-L-methionine from L-methionine: step 1/1. Catalyzes the formation of S-adenosylmethionine (AdoMet) from methionine and ATP. The overall synthetic reaction is composed of two sequential steps, AdoMet formation and the subsequent tripolyphosphate hydrolysis which occurs prior to release of AdoMet from the enzyme. The chain is S-adenosylmethionine synthase from Latilactobacillus sakei subsp. sakei (strain 23K) (Lactobacillus sakei subsp. sakei).